We begin with the raw amino-acid sequence, 136 residues long: Ribosome-binding factor A (136 aa).

Residues 114–136 (DRANRPGPAADEPDEPDEPEDRR) are disordered. Residues 124–136 (DEPDEPDEPEDRR) are compositionally biased toward acidic residues.

The protein belongs to the RbfA family. As to quaternary structure, monomer. Binds 30S ribosomal subunits, but not 50S ribosomal subunits or 70S ribosomes.

It is found in the cytoplasm. In terms of biological role, one of several proteins that assist in the late maturation steps of the functional core of the 30S ribosomal subunit. Associates with free 30S ribosomal subunits (but not with 30S subunits that are part of 70S ribosomes or polysomes). Required for efficient processing of 16S rRNA. May interact with the 5'-terminal helix region of 16S rRNA. This Bordetella petrii (strain ATCC BAA-461 / DSM 12804 / CCUG 43448) protein is Ribosome-binding factor A.